The chain runs to 71 residues: SPbeta prophage-derived uncharacterized protein YopF (71 aa).

The sequence is that of SPbeta prophage-derived uncharacterized protein YopF (yopF) from Bacillus subtilis (strain 168).